Consider the following 298-residue polypeptide: Putative cysteine protease YopT-like blr2058 (298 aa).

The segment covering 1 to 14 (MYNRVDGEYAHTEQ) has biased composition (basic and acidic residues). Disordered regions lie at residues 1-25 (MYNR…ADGS) and 59-80 (SDAI…SSSS). Residues 65-80 (SSNTSGLSTSSLSSSS) show a composition bias toward low complexity. The active site involves Cys-109. A compositionally biased stretch (basic and acidic residues) spans 137–162 (NHRSAARRQEQSEKLKTQLKEDKAEG). A disordered region spans residues 137-166 (NHRSAARRQEQSEKLKTQLKEDKAEGSHNF). Residues His-223 and Asp-238 contribute to the active site.

The protein belongs to the peptidase C58 family.

Potential cysteine protease, which may play a central role after invasion of host cell. The protein is Putative cysteine protease YopT-like blr2058 of Bradyrhizobium diazoefficiens (strain JCM 10833 / BCRC 13528 / IAM 13628 / NBRC 14792 / USDA 110).